The sequence spans 235 residues: Enolase-phosphatase E1 (235 aa).

Belongs to the HAD-like hydrolase superfamily. MasA/MtnC family. As to quaternary structure, monomer. It depends on Mg(2+) as a cofactor.

The enzyme catalyses 5-methylsulfanyl-2,3-dioxopentyl phosphate + H2O = 1,2-dihydroxy-5-(methylsulfanyl)pent-1-en-3-one + phosphate. The protein operates within amino-acid biosynthesis; L-methionine biosynthesis via salvage pathway; L-methionine from S-methyl-5-thio-alpha-D-ribose 1-phosphate: step 3/6. It functions in the pathway amino-acid biosynthesis; L-methionine biosynthesis via salvage pathway; L-methionine from S-methyl-5-thio-alpha-D-ribose 1-phosphate: step 4/6. Its function is as follows. Bifunctional enzyme that catalyzes the enolization of 2,3-diketo-5-methylthiopentyl-1-phosphate (DK-MTP-1-P) into the intermediate 2-hydroxy-3-keto-5-methylthiopentenyl-1-phosphate (HK-MTPenyl-1-P), which is then dephosphorylated to form the acireductone 1,2-dihydroxy-3-keto-5-methylthiopentene (DHK-MTPene). This Gluconacetobacter diazotrophicus (strain ATCC 49037 / DSM 5601 / CCUG 37298 / CIP 103539 / LMG 7603 / PAl5) protein is Enolase-phosphatase E1.